Reading from the N-terminus, the 348-residue chain is Glucokinase (348 aa).

14 to 19 (GDVGGS) is an ATP binding site. Residues 327 to 348 (SDPAPVAAPTHPRGGTAGDMHA) are disordered.

The protein belongs to the bacterial glucokinase family.

Its subcellular location is the cytoplasm. It catalyses the reaction D-glucose + ATP = D-glucose 6-phosphate + ADP + H(+). The protein is Glucokinase of Chromobacterium violaceum (strain ATCC 12472 / DSM 30191 / JCM 1249 / CCUG 213 / NBRC 12614 / NCIMB 9131 / NCTC 9757 / MK).